The sequence spans 320 residues: MVDNNKTVDNNYKHTSVLLDEAVKGLNIRDNGIYIDGTFGRGGHSRLILSQLGPEGRLIAIDRDPEAIEAAKQITDPRFSIVHGPFSDLAHYVRDLDLVGRIDGILLDLGVSSPQLDDAERGFSFMRDGPLDMRMDPSRGLSAAEWLMKASADDIAWVLKTFGEERFAKRLAKAIVERNLTQPMTRTKELADLIANASPFRDKHKHPATRSFQAIRIYINSELEEIERALDGAHEVLAPEGRLSVISFHSLEDRIVKNFIRHHSRGPQVPAGLPLTEAQLRSMGGRTLKSVGKMMPGDAEIAENPRARSSVLRFAERIGE.

S-adenosyl-L-methionine-binding positions include 42 to 44 (GGH), Asp62, Phe86, Asp108, and Gln115.

It belongs to the methyltransferase superfamily. RsmH family.

It is found in the cytoplasm. It catalyses the reaction cytidine(1402) in 16S rRNA + S-adenosyl-L-methionine = N(4)-methylcytidine(1402) in 16S rRNA + S-adenosyl-L-homocysteine + H(+). Specifically methylates the N4 position of cytidine in position 1402 (C1402) of 16S rRNA. The sequence is that of Ribosomal RNA small subunit methyltransferase H from Yersinia pseudotuberculosis serotype O:1b (strain IP 31758).